We begin with the raw amino-acid sequence, 355 residues long: S-adenosylmethionine:tRNA ribosyltransferase-isomerase (355 aa).

It belongs to the QueA family. In terms of assembly, monomer.

It is found in the cytoplasm. The catalysed reaction is 7-aminomethyl-7-carbaguanosine(34) in tRNA + S-adenosyl-L-methionine = epoxyqueuosine(34) in tRNA + adenine + L-methionine + 2 H(+). The protein operates within tRNA modification; tRNA-queuosine biosynthesis. In terms of biological role, transfers and isomerizes the ribose moiety from AdoMet to the 7-aminomethyl group of 7-deazaguanine (preQ1-tRNA) to give epoxyqueuosine (oQ-tRNA). The sequence is that of S-adenosylmethionine:tRNA ribosyltransferase-isomerase from Burkholderia ambifaria (strain MC40-6).